Here is a 52-residue protein sequence, read N- to C-terminus: Rubredoxin (52 aa).

A Rubredoxin-like domain is found at 1 to 51 (MDKYECSICGYIYDEAEGDDGNVAAGTKFADLPADWVCPTCGADKDAFVKM). The Fe cation site is built by Cys-6, Cys-9, Cys-38, and Cys-41.

Belongs to the rubredoxin family. Fe(3+) is required as a cofactor.

Its function is as follows. Rubredoxin is a small nonheme, iron protein lacking acid-labile sulfide. Its single Fe, chelated to 4 Cys, functions as an electron acceptor and may also stabilize the conformation of the molecule. The polypeptide is Rubredoxin (Megasphaera elsdenii).